A 425-amino-acid chain; its full sequence is Serine--tRNA ligase (425 aa).

231–233 serves as a coordination point for L-serine; the sequence is TAE. ATP is bound by residues 262-264 and valine 278; that span reads RTE. Glutamate 285 is a binding site for L-serine. Position 349-352 (349-352) interacts with ATP; the sequence is EVTS. Threonine 384 provides a ligand contact to L-serine.

The protein belongs to the class-II aminoacyl-tRNA synthetase family. Type-1 seryl-tRNA synthetase subfamily. In terms of assembly, homodimer. The tRNA molecule binds across the dimer.

It localises to the cytoplasm. The enzyme catalyses tRNA(Ser) + L-serine + ATP = L-seryl-tRNA(Ser) + AMP + diphosphate + H(+). It carries out the reaction tRNA(Sec) + L-serine + ATP = L-seryl-tRNA(Sec) + AMP + diphosphate + H(+). The protein operates within aminoacyl-tRNA biosynthesis; selenocysteinyl-tRNA(Sec) biosynthesis; L-seryl-tRNA(Sec) from L-serine and tRNA(Sec): step 1/1. Catalyzes the attachment of serine to tRNA(Ser). Is also able to aminoacylate tRNA(Sec) with serine, to form the misacylated tRNA L-seryl-tRNA(Sec), which will be further converted into selenocysteinyl-tRNA(Sec). The chain is Serine--tRNA ligase from Dictyoglomus thermophilum (strain ATCC 35947 / DSM 3960 / H-6-12).